A 195-amino-acid chain; its full sequence is Nodulin-20a (195 aa).

The signal sequence occupies residues 1–17; that stretch reads MRVVLITLFLFIGAAVA.

It belongs to the nodulin 20 family.

Its subcellular location is the symbiosome. It localises to the peribacteroid membrane. The protein localises to the peribacteroid space. In Glycine max (Soybean), this protein is Nodulin-20a (NOD20A).